The following is a 101-amino-acid chain: Large ribosomal subunit protein eL43 (101 aa).

Residues 40-62 (CPSCRSLVRLKRLAFGIWQCPKC) form a C4-type zinc finger.

The protein belongs to the eukaryotic ribosomal protein eL43 family. Zn(2+) serves as cofactor.

The polypeptide is Large ribosomal subunit protein eL43 (Pyrobaculum islandicum (strain DSM 4184 / JCM 9189 / GEO3)).